Here is a 367-residue protein sequence, read N- to C-terminus: Leucine-rich repeat-containing protein 28 (367 aa).

LRR repeat units follow at residues 16–36 (KHKN…ELLK), 42–63 (YLER…LAQK), 66–87 (NLVE…IGSL), 89–110 (KLQC…IGRL), 112–133 (ALRH…VGDL), 135–156 (ELQT…LHMC), 158–180 (SLQY…CQLP), 181–202 (SLNE…LGRS), and 204–226 (ELQY…LYNK).

The polypeptide is Leucine-rich repeat-containing protein 28 (LRRC28) (Homo sapiens (Human)).